The primary structure comprises 418 residues: Homocitrate synthase, mitochondrial (418 aa).

Polar residues predominate over residues 1–10 (MSVSEANGTE). A disordered region spans residues 1-25 (MSVSEANGTETIKPPMNGNPYGPNP). Low complexity predominate over residues 14 to 25 (PPMNGNPYGPNP). Residues 35 to 288 (FSIIESTLRE…THKYKLNQLR (254 aa)) form the Pyruvate carboxyltransferase domain. 3 residues coordinate 2-oxoglutarate: arginine 43, glutamate 44, and histidine 103. Residue glutamate 44 participates in L-lysine binding. Residue glutamate 44 coordinates Zn(2+). Aspartate 123 lines the L-lysine pocket. Arginine 163, serine 165, threonine 197, histidine 224, and histidine 226 together coordinate 2-oxoglutarate. Threonine 197 contacts L-lysine. Zn(2+) is bound by residues histidine 224 and histidine 226. Histidine 321 functions as the Proton acceptor in the catalytic mechanism.

Belongs to the alpha-IPM synthase/homocitrate synthase family. Homocitrate synthase LYS20/LYS21 subfamily. Requires Mg(2+) as cofactor. It depends on Mn(2+) as a cofactor. Zn(2+) serves as cofactor. Co(2+) is required as a cofactor.

The protein localises to the mitochondrion. It carries out the reaction acetyl-CoA + 2-oxoglutarate + H2O = (2R)-homocitrate + CoA + H(+). Its pathway is amino-acid biosynthesis; L-lysine biosynthesis via AAA pathway; L-alpha-aminoadipate from 2-oxoglutarate: step 1/5. With respect to regulation, the activity is controled by feedback inhibition by L-lysine, the final product of the pathway that acts as a competitive inhibitor of 2-oxoglutarate. Functionally, catalyzes the aldol-type condensation of 2-oxoglutarate with acetyl-CoA to yield homocitrate, the first step of the alpha-aminoadipate (AAA) lysine biosynthesis pathway. This chain is Homocitrate synthase, mitochondrial, found in Schizosaccharomyces pombe (strain 972 / ATCC 24843) (Fission yeast).